The sequence spans 222 residues: ATP-dependent dethiobiotin synthetase BioD (222 aa).

12-17 provides a ligand contact to ATP; sequence DVGKTI. Residue Thr-16 participates in Mg(2+) binding. Lys-37 is an active-site residue. Residue Thr-41 coordinates substrate. ATP contacts are provided by residues Asp-49, 107–110, 167–168, and 197–199; these read EGAG, GS, and AEG. Mg(2+) contacts are provided by Asp-49 and Glu-107.

The protein belongs to the dethiobiotin synthetase family. Homodimer. Mg(2+) is required as a cofactor.

Its subcellular location is the cytoplasm. It catalyses the reaction (7R,8S)-7,8-diammoniononanoate + CO2 + ATP = (4R,5S)-dethiobiotin + ADP + phosphate + 3 H(+). Its pathway is cofactor biosynthesis; biotin biosynthesis; biotin from 7,8-diaminononanoate: step 1/2. Its function is as follows. Catalyzes a mechanistically unusual reaction, the ATP-dependent insertion of CO2 between the N7 and N8 nitrogen atoms of 7,8-diaminopelargonic acid (DAPA, also called 7,8-diammoniononanoate) to form a ureido ring. The sequence is that of ATP-dependent dethiobiotin synthetase BioD from Corynebacterium diphtheriae (strain ATCC 700971 / NCTC 13129 / Biotype gravis).